A 299-amino-acid chain; its full sequence is uncharacterized protein (299 aa).

6 consecutive transmembrane segments (helical) span residues 32–52 (FILL…YLHL), 56–76 (SMII…SILY), 199–219 (LAIG…LLGA), 220–240 (YLIA…VKPE), 246–266 (FEIV…PIFG), and 273–293 (FLIS…ILKF).

It is found in the cell membrane. This is an uncharacterized protein from Methanocaldococcus jannaschii (strain ATCC 43067 / DSM 2661 / JAL-1 / JCM 10045 / NBRC 100440) (Methanococcus jannaschii).